The following is a 160-amino-acid chain: Putative pre-16S rRNA nuclease (160 aa).

Belongs to the YqgF nuclease family.

Its subcellular location is the cytoplasm. In terms of biological role, could be a nuclease involved in processing of the 5'-end of pre-16S rRNA. The chain is Putative pre-16S rRNA nuclease from Rhodopseudomonas palustris (strain ATCC BAA-98 / CGA009).